We begin with the raw amino-acid sequence, 151 residues long: Putative pre-16S rRNA nuclease (151 aa).

Belongs to the YqgF nuclease family.

It localises to the cytoplasm. Functionally, could be a nuclease involved in processing of the 5'-end of pre-16S rRNA. In Neisseria meningitidis serogroup C (strain 053442), this protein is Putative pre-16S rRNA nuclease.